The primary structure comprises 619 residues: Manganese lipoxygenase (619 aa).

The N-terminal stretch at 1-16 is a signal peptide; that stretch reads MRVLVWIAGLAPLAVA. N-linked (GlcNAc...) asparagine glycosylation is found at Asn32, Asn42, Asn62, Asn86, Asn164, and Asn229. A Lipoxygenase domain is found at 55 to 619; it reads TLPCEDGNST…PGNIPFYLSV (565 aa). Mn(2+) contacts are provided by His298, His303, His483, and Asn487. N-linked (GlcNAc...) asparagine glycosylation is found at Asn515 and Asn549. Position 619 (Val619) interacts with Mn(2+).

The protein belongs to the lipoxygenase family. Manganese lipoxygenase subfamily. It depends on Mn(2+) as a cofactor.

Its subcellular location is the secreted. The catalysed reaction is (9Z,12Z)-octadecadienoate + O2 = (9S)-hydroperoxy-(10E,12Z)-octadecadienoate. It catalyses the reaction (9Z,12Z)-octadecadienoate + O2 = (11S)-hydroperoxy-(9Z,12Z)-octadecadienoate. It carries out the reaction (9Z,12Z)-octadecadienoate + O2 = (13R)-hydroperoxy-(9Z,11E)-octadecadienoate. The enzyme catalyses (9Z,12Z,15Z)-octadecatrienoate + O2 = (9S)-hydroperoxy-(10E,12Z,15Z)-octadecatrienoate. The catalysed reaction is (9Z,12Z,15Z)-octadecatrienoate + O2 = (11R)-hydroperoxy-(9Z,12Z,15Z)-octadecatrienoate. It catalyses the reaction (9Z,12Z,15Z)-octadecatrienoate + O2 = (13R)-hydroperoxy-(9Z,11E,15Z)-octadecatrienoate. It carries out the reaction (9S)-hydroperoxy-(10E,12Z,15Z)-octadecatrienoate + O2 = (9S,16S)-dihydroperoxy-(10E,12Z,14E)-octadecatrienoate. In terms of biological role, lipoxygenase that metabolizes linoleic and alpha-linolenic acids to 9S-, 11- and 13R-hydroperoxy fatty acids. At the end of lipoxygenation, the intermediate product 11S-HPODE from linoleic acid is then transformed into 9S-HPODE and 13R-HPODE as the final products. The intermediate product 11R-HPOTrE from alpha-linolenic acid is transformed into 9S-HPOTrE and 13R-HPOTrE as the final products. 9S-HPOTrE is further oxidized by the enzyme to 9S,16S-DiHPOTrE as the end product. The chain is Manganese lipoxygenase from Pyricularia oryzae (strain 70-15 / ATCC MYA-4617 / FGSC 8958) (Rice blast fungus).